The following is a 237-amino-acid chain: Ribonuclease PH (237 aa).

Residues arginine 86 and 124-126 each bind phosphate; that span reads GTR.

Belongs to the RNase PH family. Homohexameric ring arranged as a trimer of dimers.

It catalyses the reaction tRNA(n+1) + phosphate = tRNA(n) + a ribonucleoside 5'-diphosphate. Phosphorolytic 3'-5' exoribonuclease that plays an important role in tRNA 3'-end maturation. Removes nucleotide residues following the 3'-CCA terminus of tRNAs; can also add nucleotides to the ends of RNA molecules by using nucleoside diphosphates as substrates, but this may not be physiologically important. Probably plays a role in initiation of 16S rRNA degradation (leading to ribosome degradation) during starvation. This chain is Ribonuclease PH, found in Bradyrhizobium sp. (strain ORS 278).